A 779-amino-acid chain; its full sequence is Endonuclease MutS2 (779 aa).

ATP is bound at residue 328–335 (GPNTGGKT). One can recognise a Smr domain in the interval 704–779 (LDLRGKRYEE…GSGATIVTLG (76 aa)).

This sequence belongs to the DNA mismatch repair MutS family. MutS2 subfamily. Homodimer. Binds to stalled ribosomes, contacting rRNA.

In terms of biological role, endonuclease that is involved in the suppression of homologous recombination and thus may have a key role in the control of bacterial genetic diversity. Functionally, acts as a ribosome collision sensor, splitting the ribosome into its 2 subunits. Detects stalled/collided 70S ribosomes which it binds and splits by an ATP-hydrolysis driven conformational change. Acts upstream of the ribosome quality control system (RQC), a ribosome-associated complex that mediates the extraction of incompletely synthesized nascent chains from stalled ribosomes and their subsequent degradation. Probably generates substrates for RQC. The protein is Endonuclease MutS2 of Streptococcus pyogenes serotype M49 (strain NZ131).